Here is a 152-residue protein sequence, read N- to C-terminus: Inner membrane protein YbbJ (152 aa).

A helical transmembrane segment spans residues 1–21 (MMELMVVHPHIFWLSLGGLLL). Residues 22–31 (AAEMLGGNGY) are Cytoplasmic-facing. A helical transmembrane segment spans residues 32–52 (LLWSGVAAVITGLVVWLVPLG). At 53-54 (WE) the chain is on the periplasmic side. Residues 55 to 75 (WQGVMFAILTLLAAWLWWKWL) form a helical membrane-spanning segment. Topologically, residues 76–152 (SRRVREQKHS…ITLHIRAVSS (77 aa)) are cytoplasmic.

It to M.jannaschii MJ0826.

Its subcellular location is the cell inner membrane. The polypeptide is Inner membrane protein YbbJ (ybbJ) (Escherichia coli (strain K12)).